The following is a 622-amino-acid chain: Polypeptide N-acetylgalactosaminyltransferase 6 (622 aa).

At 1-8 (MRLLRRRH) the chain is on the cytoplasmic side. Residues 9 to 28 (MPLRLAMVGCAFVLFLFLLH) form a helical; Signal-anchor for type II membrane protein membrane-spanning segment. Over 29–622 (RDVSSREEAT…SDPHQLWLFV (594 aa)) the chain is Lumenal. Residue Asn-86 is glycosylated (N-linked (GlcNAc...) asparagine). 2 disulfide bridges follow: Cys-165/Cys-402 and Cys-393/Cys-474. The interval 176 to 285 (LATTSVIIVF…HGWLEPLLAR (110 aa)) is catalytic subdomain A. Mn(2+)-binding residues include Asp-269, His-271, and His-407. A catalytic subdomain B region spans residues 348–410 (PIKSPTFAGG…PCSVVGHVFR (63 aa)). Asn-476 is a glycosylation site (N-linked (GlcNAc...) asparagine). Residues 506 to 622 (TNQCLDVGEN…SDPHQLWLFV (117 aa)) enclose the Ricin B-type lectin domain. Cys-509 and Cys-527 form a disulfide bridge. The UDP-N-acetyl-alpha-D-galactosamine site is built by Asp-511, Glu-514, His-528, and Asn-533. 2 disulfide bridges follow: Cys-553–Cys-566 and Cys-597–Cys-610.

It belongs to the glycosyltransferase 2 family. GalNAc-T subfamily. The cofactor is Mn(2+). Expressed in placenta and trachea. Weakly expressed in brain and pancreas. Expressed in fibroblast. Weakly or not expressed in lung, liver, muscle, kidney, spleen, thymus, prostate, testis, ovary, intestine, colon, leukocyte, stomach, thyroid, spinal cord, lymph node, trachea, adrenal gland and bone marrow.

It is found in the golgi apparatus membrane. It carries out the reaction L-seryl-[protein] + UDP-N-acetyl-alpha-D-galactosamine = a 3-O-[N-acetyl-alpha-D-galactosaminyl]-L-seryl-[protein] + UDP + H(+). It catalyses the reaction L-threonyl-[protein] + UDP-N-acetyl-alpha-D-galactosamine = a 3-O-[N-acetyl-alpha-D-galactosaminyl]-L-threonyl-[protein] + UDP + H(+). Its pathway is protein modification; protein glycosylation. Functionally, catalyzes the initial reaction in O-linked oligosaccharide biosynthesis, the transfer of an N-acetyl-D-galactosamine residue to a serine or threonine residue on the protein receptor. May participate in synthesis of oncofetal fibronectin. Has activity toward MUC1A, MUC2, EA2 and fibronectin peptides. Glycosylates FGF23. This chain is Polypeptide N-acetylgalactosaminyltransferase 6 (GALNT6), found in Homo sapiens (Human).